Consider the following 158-residue polypeptide: Ribosome maturation factor RimP (158 aa).

This sequence belongs to the RimP family.

The protein resides in the cytoplasm. Required for maturation of 30S ribosomal subunits. The polypeptide is Ribosome maturation factor RimP (Leuconostoc mesenteroides subsp. mesenteroides (strain ATCC 8293 / DSM 20343 / BCRC 11652 / CCM 1803 / JCM 6124 / NCDO 523 / NBRC 100496 / NCIMB 8023 / NCTC 12954 / NRRL B-1118 / 37Y)).